Reading from the N-terminus, the 173-residue chain is Large ribosomal subunit protein uL10 (173 aa).

Belongs to the universal ribosomal protein uL10 family. Part of the ribosomal stalk of the 50S ribosomal subunit. The N-terminus interacts with L11 and the large rRNA to form the base of the stalk. The C-terminus forms an elongated spine to which L12 dimers bind in a sequential fashion forming a multimeric L10(L12)X complex.

Functionally, forms part of the ribosomal stalk, playing a central role in the interaction of the ribosome with GTP-bound translation factors. This chain is Large ribosomal subunit protein uL10, found in Christiangramia forsetii (strain DSM 17595 / CGMCC 1.15422 / KT0803) (Gramella forsetii).